The following is a 259-amino-acid chain: DNA-directed RNA polymerase subunit Rpo3 (259 aa).

This sequence belongs to the archaeal Rpo3/eukaryotic RPB3 RNA polymerase subunit family. In terms of assembly, part of the RNA polymerase complex.

It localises to the cytoplasm. It catalyses the reaction RNA(n) + a ribonucleoside 5'-triphosphate = RNA(n+1) + diphosphate. In terms of biological role, DNA-dependent RNA polymerase (RNAP) catalyzes the transcription of DNA into RNA using the four ribonucleoside triphosphates as substrates. The sequence is that of DNA-directed RNA polymerase subunit Rpo3 from Pyrobaculum arsenaticum (strain DSM 13514 / JCM 11321 / PZ6).